Consider the following 154-residue polypeptide: SsrA-binding protein (154 aa).

It belongs to the SmpB family.

It localises to the cytoplasm. Functionally, required for rescue of stalled ribosomes mediated by trans-translation. Binds to transfer-messenger RNA (tmRNA), required for stable association of tmRNA with ribosomes. tmRNA and SmpB together mimic tRNA shape, replacing the anticodon stem-loop with SmpB. tmRNA is encoded by the ssrA gene; the 2 termini fold to resemble tRNA(Ala) and it encodes a 'tag peptide', a short internal open reading frame. During trans-translation Ala-aminoacylated tmRNA acts like a tRNA, entering the A-site of stalled ribosomes, displacing the stalled mRNA. The ribosome then switches to translate the ORF on the tmRNA; the nascent peptide is terminated with the 'tag peptide' encoded by the tmRNA and targeted for degradation. The ribosome is freed to recommence translation, which seems to be the essential function of trans-translation. The chain is SsrA-binding protein from Ruminiclostridium cellulolyticum (strain ATCC 35319 / DSM 5812 / JCM 6584 / H10) (Clostridium cellulolyticum).